The sequence spans 58 residues: MKSVISYALYQVQTGSLPVYSSVLTKSPLQLQTVIYRLIVQIQHLNIPSSSSTHSSPF.

As to expression, widely expressed, highest levels found in brain, placenta, spleen, testis, and ovary. Up-regulated in some tumor cells.

This chain is Leucine zipper protein 6 (LUZP6), found in Homo sapiens (Human).